Reading from the N-terminus, the 134-residue chain is Small ribosomal subunit protein uS8 (134 aa).

It belongs to the universal ribosomal protein uS8 family. Part of the 30S ribosomal subunit. Contacts proteins S5 and S12.

In terms of biological role, one of the primary rRNA binding proteins, it binds directly to 16S rRNA central domain where it helps coordinate assembly of the platform of the 30S subunit. In Kosmotoga olearia (strain ATCC BAA-1733 / DSM 21960 / TBF 19.5.1), this protein is Small ribosomal subunit protein uS8.